The primary structure comprises 173 residues: Shikimate kinase 1 (173 aa).

Residue 14–19 participates in ATP binding; that stretch reads GAGKST. S18 contributes to the Mg(2+) binding site. 3 residues coordinate substrate: D36, R60, and G82. R120 serves as a coordination point for ATP. R140 provides a ligand contact to substrate. Residue Q157 participates in ATP binding.

Belongs to the shikimate kinase family. Monomer. Requires Mg(2+) as cofactor.

It localises to the cytoplasm. The enzyme catalyses shikimate + ATP = 3-phosphoshikimate + ADP + H(+). Its pathway is metabolic intermediate biosynthesis; chorismate biosynthesis; chorismate from D-erythrose 4-phosphate and phosphoenolpyruvate: step 5/7. Functionally, catalyzes the specific phosphorylation of the 3-hydroxyl group of shikimic acid using ATP as a cosubstrate. In Serratia proteamaculans (strain 568), this protein is Shikimate kinase 1.